The following is a 165-amino-acid chain: Phosphopantetheine adenylyltransferase (165 aa).

Residue Thr-9 participates in substrate binding. ATP contacts are provided by residues 9 to 10 (TF) and His-17. Lys-41, Leu-73, and Arg-87 together coordinate substrate. ATP-binding positions include 88–90 (GLR), Glu-98, and 123–129 (YMFISAT).

Belongs to the bacterial CoaD family. As to quaternary structure, homohexamer. Mg(2+) is required as a cofactor.

The protein localises to the cytoplasm. It carries out the reaction (R)-4'-phosphopantetheine + ATP + H(+) = 3'-dephospho-CoA + diphosphate. The protein operates within cofactor biosynthesis; coenzyme A biosynthesis; CoA from (R)-pantothenate: step 4/5. Reversibly transfers an adenylyl group from ATP to 4'-phosphopantetheine, yielding dephospho-CoA (dPCoA) and pyrophosphate. The sequence is that of Phosphopantetheine adenylyltransferase from Nitrosospira multiformis (strain ATCC 25196 / NCIMB 11849 / C 71).